The chain runs to 391 residues: MKITDLELHAVGIPRHTGFVNKHVIVKIHTDEGLTGIGEMSDFSHLPLYSVDLHDLKQGLLSILLGQNPFDLMKINKELTDNFPETMYYYEKGSFIRNGIDNALHDLCAKYLDISVSDFLGGRVKEKIKVCYPIFRHRFSEEVESNLDVVRQKLEQGFDVFRLYVGKNLDADEEFLSRVKEEFGSRVRIKSYDFSHLLNWKDAHRAIKRLTKYDLGLEMIESPAPRNDFDGLYQLRLKTDYPISEHVWSFKQQQEMIKKDAIDIFNISPVFIGGLTSAKKAAYAAEVASKDVVLGTTQELSVGTAAMAHLGCSLTNINHTSDPTGPELYVGDVVKNRVTYKDGYLYAPDRSVKGLGIELDESLLAKYQVPDLSWDNVTVHQLQDRTADTKS.

Arginine 15 contacts substrate. Residues aspartate 42 and histidine 45 each contribute to the Mg(2+) site. A substrate-binding site is contributed by tyrosine 89. Tyrosine 90 functions as the Proton donor in the catalytic mechanism. Tyrosine 164 acts as the Proton acceptor in catalysis. Mg(2+) contacts are provided by aspartate 193, glutamate 221, and histidine 246. Threonine 296 serves as a coordination point for substrate. Threonine 297 lines the Mg(2+) pocket. Arginine 385 is a substrate binding site.

It belongs to the mandelate racemase/muconate lactonizing enzyme family. Requires Mg(2+) as cofactor.

The catalysed reaction is galactarate = (2S,3R)-dihydroxy-5-oxohexanedioate + H2O. Its function is as follows. Catalyzes the regioselective dehydration of galactarate into 2-keto-D-threo-4,5-dihydroxyadipate ((2S,3R)-dihydroxy-5-oxohexanedioate). Is not active on other acid sugars. This is Galactarate dehydratase (D-threo-forming) from Oceanobacillus iheyensis (strain DSM 14371 / CIP 107618 / JCM 11309 / KCTC 3954 / HTE831).